Consider the following 571-residue polypeptide: Hsp70-Hsp90 organizing protein 2 (571 aa).

TPR repeat units lie at residues 2-35 (ADEAKAKGNAAFSSGDFNSAVNHFTDAINLTPTN), 37-69 (VLFSNRSAAHASLNHYDEALSDAKKTVELKPDW), and 70-103 (GKGYSRLGAAHLGLNQFDEAVEAYSKGLEIDPSN). The disordered stretch occupies residues 117–137 (ASRSRASAPNPFGDAFQGPEM). The STI1 1 domain occupies 134–173 (GPEMWSKLTADPSTRGLLKQPDFVNMMKEIQRNPSNLNLY). The residue at position 168 (serine 168) is a Phosphoserine. A compositionally biased stretch (acidic residues) spans 198 to 207 (DDMEIGEEEM). The tract at residues 198–245 (DDMEIGEEEMAVPSRKEPEVEKKRKPEPEPEPEPEFGEEKQKKLKAQK) is disordered. 2 stretches are compositionally biased toward basic and acidic residues: residues 211 to 225 (SRKEPEVEKKRKPEP) and 234 to 245 (GEEKQKKLKAQK). Residues 240–257 (KLKAQKEKELGNAAYKKK) carry the Bipartite nuclear localization signal motif. 6 TPR repeats span residues 243-276 (AQKEKELGNAAYKKKDFETAIQHYSTAMEIDDED), 278-310 (SYITNRAAVHLEMGKYDECIKDCDKAVERGREL), 322-355 (TRKGTALGKMAKVSKDYEPVIQTYQKALTEHRNP), 382-415 (GDEEREKGNDFFKEQKYPDAVRHYTEAIKRNPKD), 417-449 (RAYSNRAACYTKLGAMPEGLKDAEKCIELDPTF), and 450-483 (LKGYSRKGAVQFFMKEYDNAMETYQKGLEHDPNN). Residues 520–559 (DPEIQNILTDPVMRQVLSDLQENPAAAQKHMQNPMIMNKI) enclose the STI1 2 domain.

As to quaternary structure, co-chaperone that forms a complex with HSP70 and HSP90 and preproteins (e.g. chloroplast preproteins). Phosphorylated. In terms of processing, acetylated.

The protein localises to the cytoplasm. Its subcellular location is the nucleus. In terms of biological role, mediates the association of the molecular chaperones HSP70 and HSP90. Mediates nuclear encoded chloroplast preproteins binding to HSP90 prior to chloroplastic sorting. This chain is Hsp70-Hsp90 organizing protein 2 (HOP2), found in Arabidopsis thaliana (Mouse-ear cress).